The following is a 241-amino-acid chain: NAD-dependent protein deacylase (241 aa).

Positions M1–L237 constitute a Deacetylase sirtuin-type domain. G13 to W32 contributes to the NAD(+) binding site. Substrate is bound by residues Y57 and R60. Q94 to D97 serves as a coordination point for NAD(+). H112 (proton acceptor) is an active-site residue. Zn(2+)-binding residues include C120 and C139. NAD(+) is bound by residues G179–S181, N205–E207, and A223.

This sequence belongs to the sirtuin family. Class III subfamily. In terms of assembly, monomer. Requires Zn(2+) as cofactor.

The protein localises to the cytoplasm. It localises to the host cytoplasm. It is found in the host cytosol. Its subcellular location is the host nucleus. The catalysed reaction is N(6)-acetyl-L-lysyl-[protein] + NAD(+) + H2O = 2''-O-acetyl-ADP-D-ribose + nicotinamide + L-lysyl-[protein]. The enzyme catalyses N(6)-succinyl-L-lysyl-[protein] + NAD(+) + H2O = 2''-O-succinyl-ADP-D-ribose + nicotinamide + L-lysyl-[protein]. Its function is as follows. NAD-dependent lysine deacetylase and desuccinylase that specifically removes acetyl and succinyl groups on target proteins. Modulates the activities of several proteins which are inactive in their acylated form. In the intracellular pathogen V.parahaemolyticus, this enzyme regulates host response during infection by induction of host histone deacetylation; it specifically causes deacetylation of histone lysine residues H3K56, H3K9, H3K18 and H4K16 which results in transcriptional repression of several host genes involved in epigenetic regulation, immune response, and autophagy. This is NAD-dependent protein deacylase from Vibrio parahaemolyticus serotype O3:K6 (strain RIMD 2210633).